An 856-amino-acid chain; its full sequence is 3-hydroxy-3-methylglutaryl-coenzyme A reductase (856 aa).

4 helical membrane-spanning segments follow: residues 12 to 32 (FCAS…VCML), 89 to 109 (ILGI…SSVI), 123 to 143 (LFFF…QFAL), and 190 to 210 (VLCC…MTFY). An N-linked (GlcNAc...) asparagine glycan is attached at Asn326. Residues 344 to 364 (SADHIVILILLLALAVKFVFF) traverse the membrane as a helical segment. The interval 365–443 (ETRDELTTTR…CEVMALVTSG (79 aa)) is linker. N-linked (GlcNAc...) asparagine glycosylation occurs at Asn412. The tract at residues 443 to 771 (GHIAGYQLEK…SCTMPSIEIG (329 aa)) is catalytic. Catalysis depends on charge relay system residues Glu528 and Lys659. Residue Asn700 is glycosylated (N-linked (GlcNAc...) asparagine). The active-site Charge relay system is Asp735. The Proton donor role is filled by His834. A disordered region spans residues 836–856 (RHNRSSVSTSGSEPSTPACKS). N-linked (GlcNAc...) asparagine glycosylation is present at Asn838. A compositionally biased stretch (low complexity) spans 840–856 (SSVSTSGSEPSTPACKS).

This sequence belongs to the HMG-CoA reductase family.

Its subcellular location is the endoplasmic reticulum membrane. The enzyme catalyses (R)-mevalonate + 2 NADP(+) + CoA = (3S)-3-hydroxy-3-methylglutaryl-CoA + 2 NADPH + 2 H(+). It functions in the pathway metabolic intermediate biosynthesis; (R)-mevalonate biosynthesis; (R)-mevalonate from acetyl-CoA: step 3/3. Its activity is regulated as follows. The activity of HMG-CoA-reductase is suppressed by exogenous mevalonate. In terms of biological role, synthesis of mevalonate for the production of non-sterol isoprenoids, which are essential for growth differentiation. The chain is 3-hydroxy-3-methylglutaryl-coenzyme A reductase from Blattella germanica (German cockroach).